Reading from the N-terminus, the 668-residue chain is Kinesin-like protein KIF2B (668 aa).

At threonine 125 the chain carries Phosphothreonine; by PLK1. Residues 149–177 (CLREIEKLQKQREKRRRLQLEIRARRALD) are a coiled coil. Serine 204 bears the Phosphoserine; by PLK1 mark. The Kinesin motor domain occupies 213–543 (RICVCVRKRP…LRYANRVKEL (331 aa)). An ATP-binding site is contributed by 303-310 (GQTGSGKT). Over residues 585–604 (PTVEKEEEKESDELTSKKEP) the composition is skewed to basic and acidic residues. The segment at 585–605 (PTVEKEEEKESDELTSKKEPA) is disordered. Residues 646–667 (VLTDIQKKLQSLREDLQKKSQV) adopt a coiled-coil conformation.

The protein belongs to the TRAFAC class myosin-kinesin ATPase superfamily. Kinesin family. MCAK/KIF2 subfamily. Post-translationally, phosphorylation at Thr-125 by PLK1 is required for activity in the correction of kinetochore-microtubules attachment errors, while phosphorylation at Ser-204 also by PLK1 is required for the kinetochore localization and activity in prometaphase.

The protein resides in the cytoplasm. It is found in the cytoskeleton. Its subcellular location is the microtubule organizing center. It localises to the centrosome. The protein localises to the spindle. The protein resides in the chromosome. It is found in the centromere. Its subcellular location is the kinetochore. Functionally, plus end-directed microtubule-dependent motor required for spindle assembly and chromosome movement during mitosis. Has microtubule depolymerization activity. Plays a role in chromosome congression. The sequence is that of Kinesin-like protein KIF2B (Kif2b) from Mus musculus (Mouse).